Here is a 117-residue protein sequence, read N- to C-terminus: Appetite-regulating hormone (117 aa).

Residues 1–23 form the signal peptide; sequence MVSSATICSLLLLSMLWMDMAMA. Serine 26 is lipidated: O-decanoyl serine; alternate. Serine 26 carries O-hexanoyl serine; alternate lipidation. Serine 26 carries O-octanoyl serine; alternate lipidation. Residues 28–68 are disordered; it reads LSPEHQKAQQRKESKKPPAKLQPRALEGWLHPEDRGQAEEA. The span at 31–43 shows a compositional bias: basic and acidic residues; that stretch reads EHQKAQQRKESKK. Residues 52 to 75 constitute a propeptide, removed in mature form; it reads ALEGWLHPEDRGQAEEAEEELEIR. At leucine 98 the chain carries Leucine amide. Positions 99–117 are cleaved as a propeptide — removed in mature form; the sequence is GKFLQDILWEEVKEAPANK.

This sequence belongs to the motilin family. Post-translationally, O-octanoylated by GOAT/MBOAT4. O-octanoylation is essential for ghrelin activity. The replacement of Ser-26 by aromatic tryptophan preserves ghrelin activity. Amidation of Leu-98 is essential for obestatin activity. As to expression, ghrelin is broadly expressed with higher expression in the stomach. Very low levels are detected in the hypothalamus, heart, lung, pancreas, intestine and adipose tissue. Obestatin is most highly expressed in jejunum, and also found in duodenum, stomach, pituitary, ileum, liver, hypothalamus and heart. Expressed in low levels in pancreas, cerebellum, cerebrum, kidney, testis, ovary colon and lung.

It is found in the secreted. Ghrelin is the ligand for growth hormone secretagogue receptor type 1 (GHSR). Induces the release of growth hormone from the pituitary. Has an appetite-stimulating effect, induces adiposity and stimulates gastric acid secretion. Involved in growth regulation. In terms of biological role, obestatin may be the ligand for GPR39. May have an appetite-reducing effect resulting in decreased food intake. May reduce gastric emptying activity and jejunal motility. The protein is Appetite-regulating hormone (Ghrl) of Rattus norvegicus (Rat).